A 299-amino-acid polypeptide reads, in one-letter code: Trans-aconitate 3-methyltransferase (299 aa).

Residue Ser2 is modified to N-acetylserine.

It belongs to the methyltransferase superfamily. Tam family.

The protein localises to the cytoplasm. The catalysed reaction is trans-aconitate + S-adenosyl-L-methionine = (E)-2-(methoxycarbonylmethyl)but-2-enedioate + S-adenosyl-L-homocysteine. In terms of biological role, catalyzes the S-adenosylmethionine monomethyl esterification of trans-aconitate and 3-isopropylmalate at high affinity and of other molecules like cis-aconitate, isocitrate, and citrate at lower velocities and affinities. The function of trans-aconitate methylation appears to be in reducing the toxicity of this spontaneous breakdown product of cis-aconitate. The role of 3-isopropylmalate methylation is unclear but may represent a metabolic branch at 3-isopropylmalate, where some of the material is taken in the pathway leading to leucine and some is taken in a pathway to the 3-isopropylmalate methyl ester, a molecule that provides a signal to switch from vegetative to invasive growth in response to amino acid starvation. This Saccharomyces cerevisiae (strain ATCC 204508 / S288c) (Baker's yeast) protein is Trans-aconitate 3-methyltransferase (TMT1).